We begin with the raw amino-acid sequence, 363 residues long: 3-dehydroquinate synthase (363 aa).

NAD(+)-binding positions include Gly-107–Asp-111, Thr-131–Thr-132, Lys-144, and Lys-153. Residues Glu-186, His-251, and His-268 each contribute to the Zn(2+) site.

This sequence belongs to the sugar phosphate cyclases superfamily. Dehydroquinate synthase family. NAD(+) serves as cofactor. It depends on Co(2+) as a cofactor. Requires Zn(2+) as cofactor.

Its subcellular location is the cytoplasm. The catalysed reaction is 7-phospho-2-dehydro-3-deoxy-D-arabino-heptonate = 3-dehydroquinate + phosphate. The protein operates within metabolic intermediate biosynthesis; chorismate biosynthesis; chorismate from D-erythrose 4-phosphate and phosphoenolpyruvate: step 2/7. Its function is as follows. Catalyzes the conversion of 3-deoxy-D-arabino-heptulosonate 7-phosphate (DAHP) to dehydroquinate (DHQ). The chain is 3-dehydroquinate synthase from Nostoc sp. (strain PCC 7120 / SAG 25.82 / UTEX 2576).